Consider the following 192-residue polypeptide: Thymidine kinase (192 aa).

ATP-binding positions include 9 to 16 (STMNAGKS) and 87 to 90 (DEAQ). Glutamate 88 serves as the catalytic Proton acceptor. Zn(2+)-binding residues include cysteine 145, cysteine 147, cysteine 182, and histidine 185.

Belongs to the thymidine kinase family. Homotetramer.

The protein localises to the cytoplasm. The enzyme catalyses thymidine + ATP = dTMP + ADP + H(+). This is Thymidine kinase from Pasteurella multocida (strain Pm70).